We begin with the raw amino-acid sequence, 265 residues long: Putative 2-aminoethylphosphonate transport system permease protein PhnV (265 aa).

Transmembrane regions (helical) follow at residues 13 to 33, 69 to 89, 104 to 124, 131 to 151, 185 to 205, and 233 to 253; these read GVVASVLFIVFFFLPLAVILM, LTIGFCASLFALLCGVWAALA, VFYLPSAIPSVSVGLGILVAF, MNGTLWIVLTAHFVLISAFTF, LPLLMPWMVSALALSLSLSMG, and NIADGAALTIVLVAITLLLMM. Residues 65-253 enclose the ABC transmembrane type-1 domain; it reads LLASLTIGFC…LVAITLLLMM (189 aa).

This sequence belongs to the binding-protein-dependent transport system permease family.

It is found in the cell inner membrane. Its function is as follows. Probably part of the PhnSTUV complex (TC 3.A.1.11.5) involved in 2-aminoethylphosphonate import. Probably responsible for the translocation of the substrate across the membrane. The protein is Putative 2-aminoethylphosphonate transport system permease protein PhnV (phnV) of Salmonella paratyphi A (strain ATCC 9150 / SARB42).